Reading from the N-terminus, the 186-residue chain is Cysteine protease inhibitor 10 (186 aa).

The N-terminal stretch at 1–7 (TCHDDDN) is a signal peptide. 2 cysteine pairs are disulfide-bonded: C49-C101 and C149-C155.

The protein belongs to the protease inhibitor I3 (leguminous Kunitz-type inhibitor) family.

It is found in the vacuole. Its function is as follows. Probable inhibitor of cysteine proteases. May protect the plant by inhibiting proteases of invading organisms. In Solanum tuberosum (Potato), this protein is Cysteine protease inhibitor 10.